An 882-amino-acid polypeptide reads, in one-letter code: Bifunctional heparan sulfate N-deacetylase/N-sulfotransferase 1 (882 aa).

At M1–Q17 the chain is on the cytoplasmic side. Positions M1–F169 are sufficient for localization to Golgi membrane. A helical; Signal-anchor for type II membrane protein transmembrane segment spans residues A18 to Y39. The interval G40–E598 is heparan sulfate N-deacetylase 1. The Lumenal segment spans residues G40 to R882. N231, N351, and N401 each carry an N-linked (GlcNAc...) asparagine glycan. A heparan sulfate N-sulfotransferase 1 region spans residues K599 to R882. K614 (for sulfotransferase activity) is an active-site residue. K614–T618 is a binding site for adenosine 3',5'-bisphosphate. N667 carries N-linked (GlcNAc...) asparagine glycosylation. Adenosine 3',5'-bisphosphate contacts are provided by S712 and W817. A disulfide bridge connects residues C818 and C828. K833 to Y837 is a binding site for adenosine 3',5'-bisphosphate.

Belongs to the sulfotransferase 1 family. NDST subfamily. As to quaternary structure, monomer. In terms of assembly, interacts with heparan sulfate co-polymerase subunits EXT1 and EXT2. Interacts with NDST1 isoform 3. Interacts with heparan sulfate co-polymerase subunits EXT1 and EXT2. Interacts with NDST1 isoform 1. In terms of tissue distribution, widely expressed. Expression is most abundant in heart, liver and pancreas.

The protein resides in the golgi apparatus. It localises to the trans-Golgi network membrane. It is found in the cis-Golgi network membrane. It carries out the reaction N-acetyl-alpha-D-glucosaminyl-[heparan sulfate](n) + H2O = alpha-D-glucosaminyl-[heparan sulfate](n) + acetate. The enzyme catalyses alpha-D-glucosaminyl-[heparan sulfate](n) + 3'-phosphoadenylyl sulfate = N-sulfo-alpha-D-glucosaminyl-[heparan sulfate](n) + adenosine 3',5'-bisphosphate + 2 H(+). Its pathway is glycan metabolism; heparan sulfate biosynthesis. It participates in glycan metabolism; heparin biosynthesis. In terms of biological role, essential bifunctional enzyme that catalyzes both the N-deacetylation and the N-sulfation of glucosamine (GlcNAc) of the glycosaminoglycan in heparan sulfate. Modifies the GlcNAc-GlcA disaccharide repeating sugar backbone to make N-sulfated heparosan, a prerequisite substrate for later modifications in heparin biosynthesis. Plays a role in determining the extent and pattern of sulfation of heparan sulfate. Participates in biosynthesis of heparan sulfate that can ultimately serve as L-selectin ligands, thereby playing a role in inflammatory response. Required for the exosomal release of SDCBP, CD63 and syndecan. Functionally, lacks both N-deacetylase and N-sulfotransferase activities. Acts as a dominant negative on isoform 1, likely by changing the composition of enzyme complexes responsible for elongation and modification of heparan sulfates. The sequence is that of Bifunctional heparan sulfate N-deacetylase/N-sulfotransferase 1 from Homo sapiens (Human).